The following is a 584-amino-acid chain: Protein disulfide-isomerase-like protein of the testis (584 aa).

Positions 1–20 are cleaved as a signal peptide; sequence MDLLWMPLLLVAACVSAVHS. Residues Asn-58, Asn-128, Asn-160, and Asn-340 are each glycosylated (N-linked (GlcNAc...) asparagine). In terms of domain architecture, Thioredoxin spans 388 to 451; that stretch reads LVKQLVGKNF…IAKIDVTAND (64 aa). Asn-540 carries N-linked (GlcNAc...) asparagine glycosylation. The Prevents secretion from ER signature appears at 581 to 584; that stretch reads KEEL.

This sequence belongs to the protein disulfide isomerase family. As to quaternary structure, homodimer. The homodimer is not disulfide-linked. Interacts with ERO1A and CLGN. In terms of processing, N-glycosylated. Testis-specific.

The protein resides in the endoplasmic reticulum. Probable redox-inactive chaperone involved in spermatogenesis. The protein is Protein disulfide-isomerase-like protein of the testis (PDILT) of Homo sapiens (Human).